The following is a 177-amino-acid chain: Macro domain-containing protein in non 5'region (177 aa).

One can recognise a Macro domain in the interval 1-177 (MSTSVSPVVR…VEFEEVLAMR (177 aa)).

It belongs to the MacroD-type family.

This chain is Macro domain-containing protein in non 5'region, found in Streptomyces griseus.